The chain runs to 186 residues: Elongation factor P (186 aa).

It belongs to the elongation factor P family.

The protein resides in the cytoplasm. Its pathway is protein biosynthesis; polypeptide chain elongation. Functionally, involved in peptide bond synthesis. Stimulates efficient translation and peptide-bond synthesis on native or reconstituted 70S ribosomes in vitro. Probably functions indirectly by altering the affinity of the ribosome for aminoacyl-tRNA, thus increasing their reactivity as acceptors for peptidyl transferase. This chain is Elongation factor P, found in Shewanella baltica (strain OS223).